A 205-amino-acid chain; its full sequence is Beta-crystallin B2 (205 aa).

Residue A2 is modified to N-acetylalanine. The N-terminal arm stretch occupies residues A2–S16. 2 Beta/gamma crystallin 'Greek key' domains span residues S17–S56 and G57–K101. The interval V102–E106 is connecting peptide. Beta/gamma crystallin 'Greek key' domains are found at residues H107 to S148 and G149 to R191. The tract at residues M193–N205 is C-terminal arm.

Belongs to the beta/gamma-crystallin family. In terms of assembly, homo/heterodimer, or complexes of higher-order. The structure of beta-crystallin oligomers seems to be stabilized through interactions between the N-terminal arms. The N-terminus is blocked.

Functionally, crystallins are the dominant structural components of the vertebrate eye lens. In Aquarana catesbeiana (American bullfrog), this protein is Beta-crystallin B2.